The sequence spans 406 residues: Argininosuccinate synthase (406 aa).

Residue 8-16 participates in ATP binding; it reads AYSGGLDTT. Residues tyrosine 86 and serine 91 each contribute to the L-citrulline site. Glycine 116 lines the ATP pocket. Threonine 118, asparagine 122, and aspartate 123 together coordinate L-aspartate. Asparagine 122 is an L-citrulline binding site. The L-citrulline site is built by arginine 126, serine 175, serine 184, glutamate 261, and tyrosine 273.

The protein belongs to the argininosuccinate synthase family. Type 1 subfamily. In terms of assembly, homotetramer.

It is found in the cytoplasm. It catalyses the reaction L-citrulline + L-aspartate + ATP = 2-(N(omega)-L-arginino)succinate + AMP + diphosphate + H(+). The protein operates within amino-acid biosynthesis; L-arginine biosynthesis; L-arginine from L-ornithine and carbamoyl phosphate: step 2/3. This is Argininosuccinate synthase from Brachyspira hyodysenteriae (strain ATCC 49526 / WA1).